We begin with the raw amino-acid sequence, 431 residues long: Divergent protein kinase domain 1B (431 aa).

Over 1 to 30 (MRKLRRLVHMVLFCPISKGLQSRLPGIKVK) the chain is Cytoplasmic. A May mediate ER retention motif is present at residues 5–6 (RR). Residues 31–51 (YLFLAWLSVFVGSWVVYMHYS) form a helical membrane-spanning segment. The Lumenal portion of the chain corresponds to 52–431 (SYSELCRGHV…WKKISNTKYS (380 aa)). 2 cysteine pairs are disulfide-bonded: Cys-57/Cys-94 and Cys-62/Cys-117.

Belongs to the DIPK family. Post-translationally, among the many cysteines in the lumenal domain, most are probably involved in disulfide bonds.

The protein localises to the endoplasmic reticulum membrane. The sequence is that of Divergent protein kinase domain 1B (dipk1b) from Xenopus tropicalis (Western clawed frog).